A 348-amino-acid chain; its full sequence is Dihydroorotase (348 aa).

Residues H17 and H19 each contribute to the Zn(2+) site. Substrate-binding positions include 19-21 (HLR) and N45. Zn(2+) contacts are provided by K103, H140, and H178. An N6-carboxylysine modification is found at K103. Substrate is bound at residue H140. A substrate-binding site is contributed by L223. Zn(2+) is bound at residue D251. D251 is a catalytic residue. Substrate contacts are provided by H255 and A267.

This sequence belongs to the metallo-dependent hydrolases superfamily. DHOase family. Class II DHOase subfamily. Homodimer. Zn(2+) is required as a cofactor.

The enzyme catalyses (S)-dihydroorotate + H2O = N-carbamoyl-L-aspartate + H(+). Its pathway is pyrimidine metabolism; UMP biosynthesis via de novo pathway; (S)-dihydroorotate from bicarbonate: step 3/3. Functionally, catalyzes the reversible cyclization of carbamoyl aspartate to dihydroorotate. This chain is Dihydroorotase, found in Shigella boydii serotype 4 (strain Sb227).